We begin with the raw amino-acid sequence, 4699 residues long: PKS-NRPS hybrid synthetase cheA (4699 aa).

The span at M1–P21 shows a compositional bias: acidic residues. Disordered regions lie at residues M1–P38 and D136–H165. Positions D136–H148 are enriched in basic and acidic residues. An N-terminal acylcarrier protein transacylase domain (SAT) region spans residues S172 to K520. The disordered stretch occupies residues P625–R836. Over residues T674–S688 the composition is skewed to low complexity. Residues P724–K737 are compositionally biased toward basic residues. Residues K737 to A1138 enclose the Ketosynthase family 3 (KS3) domain. Over residues A764–A777 the composition is skewed to low complexity. Polar residues predominate over residues A802–G816. Residues C873, H1012, and H1058 each act as for beta-ketoacyl synthase activity in the active site. The segment at V1250–A1573 is malonyl-CoA:ACP transacylase (MAT) domain. An N-terminal hotdog fold region spans residues N1644–P1777. Residues N1644–S1947 enclose the PKS/mFAS DH domain. The dehydratase (DH) domain stretch occupies residues E1645–L1941. The active-site Proton acceptor; for dehydratase activity is the H1676. Residues M1794–S1947 are C-terminal hotdog fold. Catalysis depends on D1854, which acts as the Proton donor; for dehydratase activity. A methyltransferase (MT) domain region spans residues L2050–E2241. The interval T2794 to V2967 is ketoreductase (KR) domain. The region spanning D3076 to A3153 is the Carrier 1 domain. An O-(pantetheine 4'-phosphoryl)serine modification is found at S3113. Positions E3164–L3265 are disordered. Polar residues-rich tracts occupy residues S3200–S3209 and G3218–I3233. Residues S3268 to L3696 are condensation (C) domain. The segment at I3730 to D4113 is adenylation (A) domain. A Carrier 2 domain is found at E4236 to S4316. The tract at residues M4241–A4313 is thiolation and peptide carrier (T) domain. Residue S4276 is modified to O-(pantetheine 4'-phosphoryl)serine. The reductase (R) domain stretch occupies residues L4367 to I4598.

This sequence in the C-terminal section; belongs to the NRP synthetase family.

It functions in the pathway secondary metabolite biosynthesis. Functionally, PKS-NRPS hybrid synthetase; part of the gene cluster that mediates the biosynthesis of chaetoglobosin A which has a unique inhibitory activity against actin polymerization in mammalian cells. Chaetoglobosin A and its intermediates are involved in the morphological differentiation of C.globosum. The first step of the pathway is the synthesis of prochaetoglobosin I via condensation of one acetyl-CoA, 8 malonyl-CoA, and a L-tryptophan molecule by the PKS-NRPS hybrid synthetase cheA, followed by reduction of backbone double bond to install desired geometry by the enoyl reductase cheB. Further multiple oxidation steps performed by the cytochrome P450 monooxygenases cheE and cheG, as well as by the FAD-linked oxidoreductase cheF, lead to the formation of chaetoglobosin A. Depending on the order of action of these reductases, distinct intermediates can be identified. Within the pathway, the cytochrome P450 monooxygenase cheE catalyzes a stereospecific epoxidation on prochaetoglobosin I, cytoglobosin D, and chaetoglobosin J intermediates. The FAD-linked oxidoreductase cheF performs dehydrogenation of the C-20 hydroxyl groups in the 20-dihyrochaetoglobosin A and cytoglobosin D intermediates. Finally, the cytochrome P450 monooxygenase cheG can catalyze the stereospecific dihydroxylation of prochaetoglobosin I and prochaetoglobosin IV at C-19 and C-20, respectively. The Diels-Alderase cheD may play a role in the post-PKS-NRPS biosynthetic steps catalyzing Diels-Alder cyclization. In Chaetomium globosum (strain ATCC 6205 / CBS 148.51 / DSM 1962 / NBRC 6347 / NRRL 1970) (Soil fungus), this protein is PKS-NRPS hybrid synthetase cheA.